The chain runs to 842 residues: Leucine--tRNA ligase (842 aa).

Residues 44-55 carry the 'HIGH' region motif; the sequence is PYPSANGLHVGH. The 'KMSKS' region signature appears at 619-623; that stretch reads KMSKS. Lysine 622 lines the ATP pocket.

It belongs to the class-I aminoacyl-tRNA synthetase family.

The protein localises to the cytoplasm. The enzyme catalyses tRNA(Leu) + L-leucine + ATP = L-leucyl-tRNA(Leu) + AMP + diphosphate. The polypeptide is Leucine--tRNA ligase (Borrelia hermsii (strain HS1 / DAH)).